The sequence spans 38 residues: Natriuretic peptide DNP (38 aa).

An intrachain disulfide couples C7 to C23. The segment at 19–38 is disordered; that stretch reads SNLGCPSLRDPRPNAPSTSA.

The protein belongs to the natriuretic peptide family. Expressed by the venom gland.

The protein localises to the secreted. Its function is as follows. Exhibits vasodilator, natriuretic and diuretic properties in animal models and human tissues. Acts by stimulating cGMP via the natriuretic peptide receptor 1 (NPR1). Is a poor agonist of the atrial natriuretic peptide receptor 2 (NPR2). Is not degraded by neutral endopeptidase (NEP/MME). Binds to atrial natriuretic peptide clearance receptor (NPR-C/NPR3), which may be responsible of the removal of DNP from the circulation. Increases calcium uptake and induces histamine release from rat peritoneal mast cells. Increases calcium-activated potassium (KCa) current in gastric antral circular smooth muscle cells by increasing cGMP production and activating inositol trisphosphate receptors (IP3Rs). In vivo, reduces both systolic and diastolic blood pressure with no effect on heart rate, when intravenously injected in conscious rabbits. This is Natriuretic peptide DNP from Dendroaspis angusticeps (Eastern green mamba).